The primary structure comprises 530 residues: N-acetylmuramoyl-L-alanine amidase (530 aa).

Residues 1-22 (MKAWGALWIVLGLLLWPEPGAA) form the signal peptide. 3 N-linked (GlcNAc...) asparagine glycosylation sites follow: Asn-61, Asn-80, and Asn-174. Ser-219 is modified (phosphoserine). Residue Asn-335 is glycosylated (N-linked (GlcNAc...) asparagine). The N-acetylmuramoyl-L-alanine amidase domain maps to 386 to 512 (FLYVHHTYVP…RQLVLTHCPG (127 aa)). His-390 serves as a coordination point for Zn(2+). A disulfide bond links Cys-399 and Cys-405. N-linked (GlcNAc...) asparagine glycosylation is present at Asn-465. Positions 502 and 510 each coordinate Zn(2+).

It belongs to the N-acetylmuramoyl-L-alanine amidase 2 family. Zn(2+) serves as cofactor. As to expression, strongly expressed in liver and fetal liver.

The protein resides in the secreted. It localises to the membrane. It carries out the reaction Hydrolyzes the link between N-acetylmuramoyl residues and L-amino acid residues in certain cell-wall glycopeptides.. In terms of biological role, may play a scavenger role by digesting biologically active peptidoglycan (PGN) into biologically inactive fragments. Has no direct bacteriolytic activity. The protein is N-acetylmuramoyl-L-alanine amidase (Pglyrp2) of Mus musculus (Mouse).